The primary structure comprises 163 residues: UPF0303 protein SAV_5210 (163 aa).

The protein belongs to the UPF0303 family.

In Streptomyces avermitilis (strain ATCC 31267 / DSM 46492 / JCM 5070 / NBRC 14893 / NCIMB 12804 / NRRL 8165 / MA-4680), this protein is UPF0303 protein SAV_5210.